The primary structure comprises 141 residues: Large ribosomal subunit protein uL11 (141 aa).

This sequence belongs to the universal ribosomal protein uL11 family. As to quaternary structure, part of the ribosomal stalk of the 50S ribosomal subunit. Interacts with L10 and the large rRNA to form the base of the stalk. L10 forms an elongated spine to which L12 dimers bind in a sequential fashion forming a multimeric L10(L12)X complex. Post-translationally, one or more lysine residues are methylated.

Functionally, forms part of the ribosomal stalk which helps the ribosome interact with GTP-bound translation factors. This chain is Large ribosomal subunit protein uL11, found in Synechococcus sp. (strain JA-2-3B'a(2-13)) (Cyanobacteria bacterium Yellowstone B-Prime).